An 807-amino-acid polypeptide reads, in one-letter code: Ribosomal RNA large subunit methyltransferase K/L (807 aa).

The THUMP domain occupies 67–182 (QIYKICLWSR…EKQAEIFLDL (116 aa)). The segment covering 548-560 (NTQYGNPEASAQS) has biased composition (polar residues). Positions 548-602 (NTQYGNPEASAQSKESKNAPEPKKDNRNRYKGNKFQQAREEAKRQEAQRLAQKKR) are disordered. Basic and acidic residues-rich tracts occupy residues 561–575 (KESK…DNRN) and 584–594 (QAREEAKRQEA).

This sequence belongs to the methyltransferase superfamily. RlmKL family.

The protein localises to the cytoplasm. It catalyses the reaction guanosine(2445) in 23S rRNA + S-adenosyl-L-methionine = N(2)-methylguanosine(2445) in 23S rRNA + S-adenosyl-L-homocysteine + H(+). The catalysed reaction is guanosine(2069) in 23S rRNA + S-adenosyl-L-methionine = N(2)-methylguanosine(2069) in 23S rRNA + S-adenosyl-L-homocysteine + H(+). Its function is as follows. Specifically methylates the guanine in position 2445 (m2G2445) and the guanine in position 2069 (m7G2069) of 23S rRNA. The sequence is that of Ribosomal RNA large subunit methyltransferase K/L from Psychrobacter sp. (strain PRwf-1).